A 376-amino-acid chain; its full sequence is Beta-centractin (376 aa).

Met1 carries the N-acetylmethionine modification. Tyr4 is subject to 3'-nitrotyrosine.

This sequence belongs to the actin family. ARP1 subfamily.

It localises to the cytoplasm. Its subcellular location is the cytoskeleton. The protein resides in the microtubule organizing center. It is found in the centrosome. Component of a multi-subunit complex involved in microtubule based vesicle motility. It is associated with the centrosome. This chain is Beta-centractin (ACTR1B), found in Homo sapiens (Human).